Here is a 233-residue protein sequence, read N- to C-terminus: Large ribosomal subunit protein bL25 (233 aa).

The segment at 1–23 is disordered; that stretch reads MATVRELKATARPKSGKGAARAE.

Belongs to the bacterial ribosomal protein bL25 family. CTC subfamily. In terms of assembly, part of the 50S ribosomal subunit; part of the 5S rRNA/L5/L18/L25 subcomplex. Contacts the 5S rRNA. Binds to the 5S rRNA independently of L5 and L18.

Functionally, this is one of the proteins that binds to the 5S RNA in the ribosome where it forms part of the central protuberance. The protein is Large ribosomal subunit protein bL25 of Nitrobacter hamburgensis (strain DSM 10229 / NCIMB 13809 / X14).